The primary structure comprises 379 residues: MGYARKVGWVTAGLVIGAGACYCIYRLTRGRKQNKEKMAEGGSGDVDDAGDCSGARYNDWSDDDDDSNESKSIVWYPPWARIGTEAGTRARARARARATRARRAVQKRASPNSDDTVLSPQELQKVLCLVEMSEKPYILEAALIALGNNAAYAFNRDIIRDLGGLPIVAKILNTRDPIVKEKALIVLNNLSVNAENQRRLKVYMNQVCDDTITSRLNSSVQLAGLRLLTNMTVTNEYQHMLANSISDFFRLFSAGNEETKLQVLKLLLNLAENPAMTRELLRAQVPSSLGSLFNKKENKEVILKLLVIFENINDNFKWEENEPTQNQFGEGSLFFFLKEFQVCADKVLGIESHHDFLVKVKVGKFMAKLAEHMFPKSQE.

Over 1–6 (MGYARK) the chain is Mitochondrial intermembrane. Mitochondrion outer membrane (MOM)-targeting sequence stretches follow at residues 1 to 6 (MGYARK) and 26 to 37 (RLTRGRKQNKEK). A helical; Signal-anchor membrane pass occupies residues 7-29 (VGWVTAGLVIGAGACYCIYRLTR). Over 30–379 (GRKQNKEKMA…AEHMFPKSQE (350 aa)) the chain is Cytoplasmic. Residues Ser61, Ser67, and Ser72 each carry the phosphoserine modification. The interval 89–98 (RARARARARA) is nuclear localization signal. Positions 95–106 (RARATRARRAVQ) are enriched in basic residues. Positions 95–116 (RARATRARRAVQKRASPNSDDT) are disordered. Ser110 bears the Phosphoserine mark. 3 ARM repeats span residues 111-151 (PNSD…NNAA), 153-192 (AFNR…NLSV), and 233-272 (VTNE…NLAE).

It belongs to the eutherian X-chromosome-specific Armcx family. In terms of assembly, interacts (via ARM domain) with MIRO1, MIRO2 and TRAK2. The interaction with Miro is calcium-dependent. Interacts with SOX10.

The protein localises to the mitochondrion outer membrane. It is found in the cytoplasm. Its subcellular location is the nucleus. Regulates mitochondrial aggregation and transport in axons in living neurons. May link mitochondria to the TRAK2-kinesin motor complex via its interaction with Miro and TRAK2. Mitochondrial distribution and dynamics is regulated through ARMCX3 protein degradation, which is promoted by PCK and negatively regulated by WNT1. Enhances the SOX10-mediated transactivation of the neuronal acetylcholine receptor subunit alpha-3 and beta-4 subunit gene promoters. In Homo sapiens (Human), this protein is Armadillo repeat-containing X-linked protein 3 (ARMCX3).